Here is a 130-residue protein sequence, read N- to C-terminus: Small ribosomal subunit protein uS11 (130 aa).

Belongs to the universal ribosomal protein uS11 family. In terms of assembly, part of the 30S ribosomal subunit. Interacts with proteins S7 and S18. Binds to IF-3.

In terms of biological role, located on the platform of the 30S subunit, it bridges several disparate RNA helices of the 16S rRNA. Forms part of the Shine-Dalgarno cleft in the 70S ribosome. This Prochlorococcus marinus (strain MIT 9211) protein is Small ribosomal subunit protein uS11.